A 351-amino-acid polypeptide reads, in one-letter code: Phosphate acyltransferase (351 aa).

Belongs to the PlsX family. In terms of assembly, homodimer. Probably interacts with PlsY.

Its subcellular location is the cytoplasm. It catalyses the reaction a fatty acyl-[ACP] + phosphate = an acyl phosphate + holo-[ACP]. Its pathway is lipid metabolism; phospholipid metabolism. Its function is as follows. Catalyzes the reversible formation of acyl-phosphate (acyl-PO(4)) from acyl-[acyl-carrier-protein] (acyl-ACP). This enzyme utilizes acyl-ACP as fatty acyl donor, but not acyl-CoA. This Neisseria meningitidis serogroup B (strain ATCC BAA-335 / MC58) protein is Phosphate acyltransferase.